Here is a 331-residue protein sequence, read N- to C-terminus: MKKPVVIGLAVVVLAAVVAGGYWWYQSRQDNGLTLYGNVDIRTVNLSFRVGGRVESLAVDEGDAIKAGQVLGELDHKPYEIALMQAKAGVSVAQAQYDLMLAGYRDEEIAQAAAAVKQAQAAYDYAQNFYNRQQGLWKSRTISANDLENARSSRDQAQATLKSAQDKLRQYRSGNREQDIAQAKASLEQAQAQLAQAELNLQDSTLIAPSDGTLLTRAVEPGTVLNEGGTVFTVSLTRPVWVRAYVDERNLDQAQPGRKVLLYTDGRPDKPYHGQIGFVSPTAEFTPKTVETPDLRTDLVYRLRIVVTDADDALRQGMPVTVQFGDEAGHE.

A signal peptide spans 1-15 (MKKPVVIGLAVVVLA). Positions 107 to 208 (EEIAQAAAAV…LNLQDSTLIA (102 aa)) form a coiled coil.

Belongs to the UPF0194 family.

It localises to the periplasm. This Escherichia coli O157:H7 (strain EC4115 / EHEC) protein is UPF0194 membrane protein YbhG.